A 606-amino-acid chain; its full sequence is MSTASAASSSSSSSASEMIEAPSQVLNFEEIDYKEIEVEEVVGRGAFGVVCKAKWRAKDVAIKQIESESERKAFIVELRQLSRVNHPNIVKLYGACLNPVCLVMEYAEGGSLYNVLHGAEPLPYYTAAHAMSWCLQCSQGVAYLHSMQPKALIHRDLKPPNLLLVAGGTVLKICDFGTACDIQTHMTNNKGSAAWMAPEVFEGSNYSEKCDVFSWGIILWEVITRRKPFDEIGGPAFRIMWAVHNGTRPPLIKNLPKPIESLMTRCWSKDPSQRPSMEEIVKIMTHLMRYFPGADEPLQYPCQYSDEGQSNSATSTGSFMDIASTNTSNKSDTNMEQVPATNDTIKRLESKLLKNQAKQQSDSGRLSLGASRGSSVESLPPTSEGKRMSADMSEIEARIVATTAYTKPKRGHRKTASFGNILDVPEIVISGNGQPRRRSIQDLTVTGTEPGQVSSRSSSPSVRMITTSGPTSEKPARSLPWTPDDSTDTNGSDNSIPMAYLTLDHQLQPLAPCPNSKESMAVFEQHCKMAQEYMKVQTEIALLLQRKQELVAELDQDEKDQQNTSRLVQEHKKLLDENKSLSTYYQQCKKQLEVIRSQQQKRQGTS.

The segment at 1–300 (MSTASAASSS…FPGADEPLQY (300 aa)) is interaction with MAPK8IP1. Residues 36–291 (IEVEEVVGRG…KIMTHLMRYF (256 aa)) enclose the Protein kinase domain. ATP is bound by residues 42–50 (VGRGAFGVV) and K63. K72 participates in a covalent cross-link: Glycyl lysine isopeptide (Lys-Gly) (interchain with G-Cter in ubiquitin). D156 functions as the Proton acceptor in the catalytic mechanism. Residue K158 forms a Glycyl lysine isopeptide (Lys-Gly) (interchain with G-Cter in ubiquitin) linkage. Phosphothreonine; by autocatalysis is present on residues T184 and T187. S192 carries the post-translational modification Phosphoserine; by autocatalysis. K209 participates in a covalent cross-link: Glycyl lysine isopeptide (Lys-Gly) (interchain with G-Cter in ubiquitin). Disordered stretches follow at residues 301 to 338 (PCQYSDEGQSNSATSTGSFMDIASTNTSNKSDTNMEQV) and 354 to 391 (KNQAKQQSDSGRLSLGASRGSSVESLPPTSEGKRMSAD). Residues 306–338 (DEGQSNSATSTGSFMDIASTNTSNKSDTNMEQV) show a composition bias toward polar residues. Residues 361-375 (SDSGRLSLGASRGSS) are compositionally biased toward low complexity. S367, S389, and S439 each carry phosphoserine. Residues 443-452 (LTVTGTEPGQ) show a composition bias toward polar residues. The segment at 443–492 (LTVTGTEPGQVSSRSSSPSVRMITTSGPTSEKPARSLPWTPDDSTDTNGS) is disordered. Positions 453-463 (VSSRSSSPSVR) are enriched in low complexity. S455 is subject to Phosphoserine.

This sequence belongs to the protein kinase superfamily. STE Ser/Thr protein kinase family. MAP kinase kinase kinase subfamily. In terms of assembly, can form homodimer. Binds both upstream activators and downstream substrates in multimolecular complexes. Interacts with TAB1/MAP3K7IP1, TAB2/MAP3K7IP2 and TAB3/MAP3K7IP3. Identified in the TRIKA2 complex composed of MAP3K7/TAK1, TAB1/MAP3K7IP1 and TAB2/MAP3K7IP2. Interacts with PPM1L and PPM1B/PP2CB. Interaction with PP2A and PPP6C leads to its repressed activity. Interacts with TRAF6 and TAB1/MAP3K7IP1; during IL-1 signaling. Interacts with TAOK1 and TAOK2; interaction with TAOK2 interferes with MAP3K7 interaction with IKKA, thus preventing NF-kappa-B activation. Interacts with DYNC2I2 (via WD domains). Interacts with CYLD and RBCK1. Interacts with TGFBR1; induces MAP3K7/TAK1 activation by TRAF6. Interacts with MAPK8IP1 and SMAD6. Interacts with isoform 1 of VRK2. Interacts with DAB2; the interaction is induced by TGF-beta stimulation and may mediate TGF-beta stimulated JNK activation. Interacts with TRIM5. Part of a complex containing ITCH, NDFIP1 and MAP3K7. Interacts with PLEKHM1 (via N- and C-terminus). Found in a complex with SH3RF1, RAC2, MAP2K7/MKK7, MAPK8IP1/JIP1, MAPK8/JNK1 and MAPK9/JNK2. Interacts with SASH1. Interacts with RIPK1. The cofactor is Mg(2+). Post-translationally, association with TAB1/MAP3K7IP1 promotes autophosphorylation at Ser-192 and subsequent activation. Association with TAB2/MAP3K7IP2, itself associated with free unanchored Lys-63 polyubiquitin chain, promotes autophosphorylation and subsequent activation of MAP3K7. Dephosphorylation at Ser-192 by PPM1B/PP2CB and at Thr-187 by PP2A and PPP6C leads to inactivation. Deubiquitinated by USP19; leading to negative regulation of TNF-alpha- and IL-1beta-triggered NF-kappa-B activation. 'Lys-48'-linked polyubiquitination at Lys-72 is induced by TNFalpha, and leads to proteasomal degradation. Undergoes 'Lys-48'-linked polyubiquitination catalyzed by ITCH. 'Lys-63'-linked polyubiquitination at Lys-158 by TRIM8 does not lead to proteasomal degradation but contributes to autophosphorylation and activation. Deubiquitinated by CYLD, a protease that selectively cleaves 'Lys-63'-linked ubiquitin chains.

The protein resides in the cytoplasm. It is found in the cell membrane. It carries out the reaction L-seryl-[protein] + ATP = O-phospho-L-seryl-[protein] + ADP + H(+). The enzyme catalyses L-threonyl-[protein] + ATP = O-phospho-L-threonyl-[protein] + ADP + H(+). Its activity is regulated as follows. Activated by pro-inflammatory cytokines and in response to physical and chemical stresses, including osmotic stress, oxidative stress, arsenic and ultraviolet light irradiation. Activated by 'Lys-63'-linked polyubiquitination and by autophosphorylation. Association with TAB1/MAP3K7IP1 and TAB2/MAP3K7IP2 promotes activation through autophosphorylation, whereas PPM1B/PP2CB, PP2A and PPP6C dephosphorylation leads to inactivation. Ceramides are also able to activate MAP3K7/TAK1. In terms of biological role, serine/threonine kinase which acts as an essential component of the MAP kinase signal transduction pathway. Plays an important role in the cascades of cellular responses evoked by changes in the environment. Mediates signal transduction of TRAF6, various cytokines including interleukin-1 (IL-1), transforming growth factor-beta (TGFB), TGFB-related factors like BMP2 and BMP4, toll-like receptors (TLR), tumor necrosis factor receptor CD40 and B-cell receptor (BCR). Once activated, acts as an upstream activator of the MKK/JNK signal transduction cascade and the p38 MAPK signal transduction cascade through the phosphorylation and activation of several MAP kinase kinases like MAP2K1/MEK1, MAP2K3/MKK3, MAP2K6/MKK6 and MAP2K7/MKK7. These MAP2Ks in turn activate p38 MAPKs and c-jun N-terminal kinases (JNKs); both p38 MAPK and JNK pathways control the transcription factors activator protein-1 (AP-1). Independently of MAP2Ks and p38 MAPKs, acts as a key activator of NF-kappa-B by promoting activation of the I-kappa-B-kinase (IKK) core complex. Mechanistically, recruited to polyubiquitin chains of RIPK2 and IKBKG/NEMO via TAB2/MAP3K7IP2 and TAB3/MAP3K7IP3, and catalyzes phosphorylation and activation of IKBKB/IKKB component of the IKK complex, leading to NF-kappa-B activation. In osmotic stress signaling, plays a major role in the activation of MAPK8/JNK1, but not that of NF-kappa-B. Promotes TRIM5 capsid-specific restriction activity. Phosphorylates RIPK1 at 'Ser-321' which positively regulates RIPK1 interaction with RIPK3 to promote necroptosis but negatively regulates RIPK1 kinase activity and its interaction with FADD to mediate apoptosis. Phosphorylates STING1 in response to cGAMP-activation, promoting association between STEEP1 and STING1 and STING1 translocation to COPII vesicles. This chain is Mitogen-activated protein kinase kinase kinase 7 (Map3k7), found in Rattus norvegicus (Rat).